The sequence spans 352 residues: Zinc transporter 1 (352 aa).

The N-terminal stretch at 1–29 (MARTMTMRVSSLLVAVVLLAALSFQACSG) is a signal peptide. Over 30 to 56 (HGGINDGDGQVDAPATPASSSGVRSKG) the chain is Extracellular. The chain crosses the membrane as a helical span at residues 57–77 (LIAVKVWCLVILLVFTFAGGV). Topologically, residues 78-87 (SPYFYRWNES) are cytoplasmic. The helical transmembrane segment at 88–108 (FLLLGTQFAAGVFLGTALMHF) threads the bilayer. At 109 to 127 (LADSTSTFKGLTTNQYPFS) the chain is on the extracellular side. The helical transmembrane segment at 128–148 (FMLTCVGFLLTMLSDLVIAAV) threads the bilayer. Topologically, residues 149-200 (ARRSAAAGVSDNQVSEQQQRQQAEGAVMSRKEEEAAAVAHPAMLVRTSSFED) are cytoplasmic. The helical transmembrane segment at 201 to 221 (AVLLIVALCFHSVFEGIAIGV) threads the bilayer. At 222-230 (SASKSEAWR) the chain is on the extracellular side. Residues 231-251 (NLWTIGLHKIFAAVAMGIALL) form a helical membrane-spanning segment. The Cytoplasmic portion of the chain corresponds to 252–262 (RMIPKRPFLMT). Residues 263–283 (VVYSLAFAVSSPVGVGIGIAI) form a helical membrane-spanning segment. Residues 284-296 (DATSQGRAADWTY) lie on the Extracellular side of the membrane. Residues 297–317 (AISMGLATGVFIYVAINHLIA) traverse the membrane as a helical segment. The Cytoplasmic portion of the chain corresponds to 318 to 330 (KGYRPHHPTAADK). Residues 331–351 (PLFKFLAVLLGVAVMAVVMIW) traverse the membrane as a helical segment. A topological domain (extracellular) is located at residue Asp-352.

It belongs to the ZIP transporter (TC 2.A.5) family. In terms of tissue distribution, expressed in vascular bundles of roots and leaves.

The protein resides in the cell membrane. In terms of biological role, zinc transporter that may mediate zinc uptake from the rhizosphere. May also transport other divalent cations. In Oryza sativa subsp. japonica (Rice), this protein is Zinc transporter 1 (ZIP1).